A 512-amino-acid polypeptide reads, in one-letter code: Probable cobyric acid synthase (512 aa).

The GATase cobBQ-type domain occupies serine 275 to alanine 460. The active-site Nucleophile is the cysteine 353. Histidine 452 is a catalytic residue.

Belongs to the CobB/CobQ family. CobQ subfamily.

It functions in the pathway cofactor biosynthesis; adenosylcobalamin biosynthesis. In terms of biological role, catalyzes amidations at positions B, D, E, and G on adenosylcobyrinic A,C-diamide. NH(2) groups are provided by glutamine, and one molecule of ATP is hydrogenolyzed for each amidation. The sequence is that of Probable cobyric acid synthase from Halobacterium salinarum (strain ATCC 29341 / DSM 671 / R1).